We begin with the raw amino-acid sequence, 606 residues long: NADH-ubiquinone oxidoreductase chain 5 (606 aa).

Methionine 1 carries the post-translational modification N-formylmethionine. Helical transmembrane passes span 4 to 24 (FSSL…MMSF), 43 to 63 (AFIT…ELII), 87 to 107 (MMFI…SMWY), 117 to 137 (FFKY…ANNL), 140 to 160 (LFIG…WWYG), 171 to 191 (AILY…WFLT), 213 to 233 (LIGL…HPWL), 241 to 261 (TPVS…FLLI), 273 to 293 (IQSI…MCAL), 310 to 330 (LGLM…LHIC), 366 to 386 (MPFT…MPFL), 413 to 433 (LIAT…ALLG), 457 to 477 (LLIG…PTTI), 482 to 502 (MPYY…ILAL), and 582 to 602 (GLIK…MILF).

As to quaternary structure, core subunit of respiratory chain NADH dehydrogenase (Complex I) which is composed of 45 different subunits.

It is found in the mitochondrion inner membrane. It carries out the reaction a ubiquinone + NADH + 5 H(+)(in) = a ubiquinol + NAD(+) + 4 H(+)(out). In terms of biological role, core subunit of the mitochondrial membrane respiratory chain NADH dehydrogenase (Complex I) which catalyzes electron transfer from NADH through the respiratory chain, using ubiquinone as an electron acceptor. Essential for the catalytic activity and assembly of complex I. The chain is NADH-ubiquinone oxidoreductase chain 5 (MT-ND5) from Bos taurus (Bovine).